The primary structure comprises 154 residues: Large ribosomal subunit protein uL15 (154 aa).

Residues Met1 to Arg13 are compositionally biased toward basic and acidic residues. The disordered stretch occupies residues Met1–Gly52.

The protein belongs to the universal ribosomal protein uL15 family. In terms of assembly, part of the 50S ribosomal subunit.

Its function is as follows. Binds to the 23S rRNA. This Deinococcus deserti (strain DSM 17065 / CIP 109153 / LMG 22923 / VCD115) protein is Large ribosomal subunit protein uL15.